The following is a 276-amino-acid chain: MENRYATSPEDVKRYTTDKLRQEFLVESLFTPGEIQMVYTHFDRTVIGGAIPMKEPLALDAGDFLKTDYFLERREVGIINIGPKGKVIVDGDEYTLNKRDCLYIGLGKRDVSFHSEDSSNPARFYFVSALAHHEYPTKVLPIEEAVPTKLGSDAESNNRTIYKYIHSEGIQSCQLMMGMTLLEPNNMWNTMPAHIHDRRNEVYLYFDMEDDSRVFHFMGQPHETRHLVVKNEQAVISPPWSIHSGVGTANYTFIWAMAGENYTFTDMEFIKMEDLR.

Zn(2+) is bound by residues H194, H196, E201, and H243.

The protein belongs to the KduI family. Zn(2+) is required as a cofactor.

It catalyses the reaction 5-dehydro-4-deoxy-D-glucuronate = 3-deoxy-D-glycero-2,5-hexodiulosonate. The protein operates within glycan metabolism; pectin degradation; 2-dehydro-3-deoxy-D-gluconate from pectin: step 4/5. In terms of biological role, catalyzes the isomerization of 5-dehydro-4-deoxy-D-glucuronate to 3-deoxy-D-glycero-2,5-hexodiulosonate. This Halalkalibacterium halodurans (strain ATCC BAA-125 / DSM 18197 / FERM 7344 / JCM 9153 / C-125) (Bacillus halodurans) protein is 4-deoxy-L-threo-5-hexosulose-uronate ketol-isomerase.